The chain runs to 1601 residues: Ectopic P granules protein 5 (1601 aa).

The disordered stretch occupies residues 1–109 (MAELVRPKKP…EAPPIPARNL (109 aa)). Residues 15–26 (RPQSDDAPRIPD) show a composition bias toward basic and acidic residues.

It belongs to the EPG5 family.

The protein localises to the cytoplasm. Its function is as follows. Involved in autophagy. Has a role in the degradation of protein aggregates within autophagosomes. Essential for starvation-induced autotrophy and omegasome development. The polypeptide is Ectopic P granules protein 5 (epg-5) (Caenorhabditis briggsae).